The following is a 185-amino-acid chain: Elongation factor P (185 aa).

This sequence belongs to the elongation factor P family.

The protein localises to the cytoplasm. It participates in protein biosynthesis; polypeptide chain elongation. Functionally, involved in peptide bond synthesis. Stimulates efficient translation and peptide-bond synthesis on native or reconstituted 70S ribosomes in vitro. Probably functions indirectly by altering the affinity of the ribosome for aminoacyl-tRNA, thus increasing their reactivity as acceptors for peptidyl transferase. This Dictyoglomus thermophilum (strain ATCC 35947 / DSM 3960 / H-6-12) protein is Elongation factor P.